Consider the following 534-residue polypeptide: CTP synthase (534 aa).

Residues 1-267 (MTKYIFVTGG…DQIVCDHLKL (267 aa)) form an amidoligase domain region. A CTP-binding site is contributed by S13. S13 is a UTP binding site. 14-19 (SIGKGI) is an ATP binding site. Y54 contributes to the L-glutamine binding site. D71 is an ATP binding site. D71 and E141 together coordinate Mg(2+). CTP contacts are provided by residues 148-150 (DIE), 188-193 (KTKPTQ), and K224. UTP is bound by residues 188 to 193 (KTKPTQ) and K224. One can recognise a Glutamine amidotransferase type-1 domain in the interval 292 to 534 (KIALVGKYVE…FVTAAVENMK (243 aa)). G354 contributes to the L-glutamine binding site. The active-site Nucleophile; for glutamine hydrolysis is C381. L-glutamine-binding positions include 382-385 (LGMQ), E405, and R463. Residues H508 and E510 contribute to the active site.

This sequence belongs to the CTP synthase family. In terms of assembly, homotetramer.

It catalyses the reaction UTP + L-glutamine + ATP + H2O = CTP + L-glutamate + ADP + phosphate + 2 H(+). The enzyme catalyses L-glutamine + H2O = L-glutamate + NH4(+). It carries out the reaction UTP + NH4(+) + ATP = CTP + ADP + phosphate + 2 H(+). It participates in pyrimidine metabolism; CTP biosynthesis via de novo pathway; CTP from UDP: step 2/2. Allosterically activated by GTP, when glutamine is the substrate; GTP has no effect on the reaction when ammonia is the substrate. The allosteric effector GTP functions by stabilizing the protein conformation that binds the tetrahedral intermediate(s) formed during glutamine hydrolysis. Inhibited by the product CTP, via allosteric rather than competitive inhibition. Catalyzes the ATP-dependent amination of UTP to CTP with either L-glutamine or ammonia as the source of nitrogen. Regulates intracellular CTP levels through interactions with the four ribonucleotide triphosphates. This chain is CTP synthase, found in Streptococcus agalactiae serotype Ia (strain ATCC 27591 / A909 / CDC SS700).